The chain runs to 238 residues: Uridylate kinase (238 aa).

10–13 is an ATP binding site; sequence KFSG. The involved in allosteric activation by GTP stretch occupies residues 18–23; it reads GENGFG. Residue G52 participates in UMP binding. Positions 53 and 57 each coordinate ATP. Residues D73 and 134–141 contribute to the UMP site; that span reads TGNPFFTT. Positions 161, 167, and 170 each coordinate ATP.

This sequence belongs to the UMP kinase family. As to quaternary structure, homohexamer.

The protein resides in the cytoplasm. The catalysed reaction is UMP + ATP = UDP + ADP. The protein operates within pyrimidine metabolism; CTP biosynthesis via de novo pathway; UDP from UMP (UMPK route): step 1/1. Its activity is regulated as follows. Allosterically activated by GTP. Inhibited by UTP. Its function is as follows. Catalyzes the reversible phosphorylation of UMP to UDP. The chain is Uridylate kinase from Campylobacter concisus (strain 13826).